The sequence spans 510 residues: GMP synthase [glutamine-hydrolyzing] (510 aa).

Residues 5 to 195 enclose the Glutamine amidotransferase type-1 domain; the sequence is MIVVLDFGSQ…VFEVCGCRGD (191 aa). Cys82 acts as the Nucleophile in catalysis. Residues His169 and Glu171 contribute to the active site. The GMPS ATP-PPase domain occupies 196 to 385; that stretch reads WTMENFIDEQ…LGIPDEIVWR (190 aa). ATP is bound at residue 223 to 229; the sequence is SGGVDSS.

As to quaternary structure, homodimer.

The enzyme catalyses XMP + L-glutamine + ATP + H2O = GMP + L-glutamate + AMP + diphosphate + 2 H(+). Its pathway is purine metabolism; GMP biosynthesis; GMP from XMP (L-Gln route): step 1/1. Functionally, catalyzes the synthesis of GMP from XMP. The sequence is that of GMP synthase [glutamine-hydrolyzing] from Geobacillus kaustophilus (strain HTA426).